An 879-amino-acid chain; its full sequence is Alanine--tRNA ligase (879 aa).

Zn(2+) is bound by residues His566, His570, Cys668, and His672.

Belongs to the class-II aminoacyl-tRNA synthetase family. It depends on Zn(2+) as a cofactor.

The protein resides in the cytoplasm. It carries out the reaction tRNA(Ala) + L-alanine + ATP = L-alanyl-tRNA(Ala) + AMP + diphosphate. Catalyzes the attachment of alanine to tRNA(Ala) in a two-step reaction: alanine is first activated by ATP to form Ala-AMP and then transferred to the acceptor end of tRNA(Ala). Also edits incorrectly charged Ser-tRNA(Ala) and Gly-tRNA(Ala) via its editing domain. This is Alanine--tRNA ligase from Clostridium novyi (strain NT).